A 400-amino-acid polypeptide reads, in one-letter code: Opsin-3 (400 aa).

Residues 1-38 are Extracellular-facing; it reads MYSGNRSGDQGYWEDGAGAEGAAPAGTRSPAPLFSPTA. Asn-5 carries an N-linked (GlcNAc...) asparagine glycan. A helical transmembrane segment spans residues 39-63; that stretch reads YERLALLLGCLALLGVGGNLLVLLL. Residues 64-75 lie on the Cytoplasmic side of the membrane; it reads YSKFPRLRTPTH. A helical transmembrane segment spans residues 76–100; the sequence is LFLVNLSLGDLLVSLFGVTFTFASC. Residues 101–115 are Extracellular-facing; the sequence is LRNGWVWDAVGCAWD. A disulfide bridge links Cys-112 with Cys-186. A helical transmembrane segment spans residues 116–135; that stretch reads GFSGSLFGFVSITTLTVLAY. Over 136–151 the chain is Cytoplasmic; sequence ERYIRVVHARVINFSW. The helical transmembrane segment at 152-175 threads the bilayer; it reads AWRAITYIWLYSLAWAGAPLLGWN. Residues 176–199 lie on the Extracellular side of the membrane; it reads RYILDIHGLGCTVDWRSKDANDSS. N-linked (GlcNAc...) asparagine glycosylation is present at Asn-196. Residues 200-227 form a helical membrane-spanning segment; sequence FVLFLFLGCLVVPVGIIAHCYGHILYSV. The Cytoplasmic segment spans residues 228–253; sequence RMLRCVEDLQTIQVIKMLRYEKKVAK. Residues 254-277 traverse the membrane as a helical segment; sequence MCFLMAFVFLTCWMPYIVTRFLVV. Topologically, residues 278 to 285 are extracellular; it reads NGYGHLVT. Residues 286 to 310 form a helical membrane-spanning segment; it reads PTVSIVSYLFAKSSTVYNPVIYIFM. An N6-(retinylidene)lysine modification is found at Lys-297. Topologically, residues 311 to 400 are cytoplasmic; it reads NRKFRRSLLQ…KVDVIQVRPL (90 aa). A lipid anchor (S-palmitoyl cysteine) is attached at Cys-323.

This sequence belongs to the G-protein coupled receptor 1 family. Opsin subfamily. Interacts with MC1R; the interaction results in a decrease in MC1R-mediated cAMP signaling and ultimately a decrease in melanin production in melanocytes. Expressed in the eye (at protein level). Expressed in tracheal airway smooth muscle. Expressed in brown adipocyte tissue; expression becomes more abundant during differentiation. Strongly expressed in brain. Highly expressed in the preoptic area and paraventricular nucleus of the hypothalamus. Shows highly patterned expression in other regions of the brain, being enriched in selected regions of the cerebral cortex, cerebellar Purkinje cells, a subset of striatal neurons, selected thalamic nuclei, and a subset of interneurons in the ventral horn of the spinal cord.

It is found in the cell membrane. The protein localises to the cytoplasm. In terms of biological role, G-protein coupled receptor which selectively activates G proteins via ultraviolet A (UVA) light-mediated activation in the skin. Binds both 11-cis retinal and all-trans retinal. Regulates melanogenesis in melanocytes via inhibition of alpha-MSH-induced MC1R-mediated cAMP signaling, modulation of calcium flux, regulation of CAMK2 phosphorylation, and subsequently phosphorylation of CREB, p38, ERK and MITF in response to blue light. Plays a role in melanocyte survival through regulation of intracellular calcium levels and subsequent BCL2/RAF1 signaling. Additionally regulates apoptosis via cytochrome c release and subsequent activation of the caspase cascade. Required for TYR and DCT blue light-induced complex formation in melanocytes. Involved in keratinocyte differentiation in response to blue-light. Required for the UVA-mediated induction of calcium and mitogen-activated protein kinase signaling resulting in the expression of MMP1, MMP2, MMP3, MMP9 and TIMP1 in dermal fibroblasts. Plays a role in light-mediated glucose uptake, mitochondrial respiration and fatty acid metabolism in brown adipocyte tissues. May be involved in photorelaxation of airway smooth muscle cells, via blue-light dependent GPCR signaling pathways. This chain is Opsin-3 (Opn3), found in Mus musculus (Mouse).